The sequence spans 663 residues: Putative ankyrin repeat protein R219 (663 aa).

ANK repeat units follow at residues 91–118 (FRIK…GYKV), 119–148 (DFDS…KLSS), 200–229 (ANQQ…KDGT), 258–288 (DWHV…KINP), and 322–351 (YFSH…GITV).

In Acanthamoeba polyphaga mimivirus (APMV), this protein is Putative ankyrin repeat protein R219.